The chain runs to 1227 residues: Splicing factor 3B subunit 3 (1227 aa).

Belongs to the RSE1 family. In terms of assembly, identified in the spliceosome A complex; remains associated with the spliceosome throughout the splicing process. Component of the spliceosome B complex. Identified in the spliceosome C complex. Identified in the spliceosome E complex. Component of the U11/U12 snRNPs that are part of the U12-type spliceosome. Component of splicing factor SF3B complex. Identified in the SAGA transcription regulatory histone acetylation (HAT) complex; the interaction is RNA-independent.

The protein resides in the nucleus. Its function is as follows. Involved in pre-mRNA splicing as a component of the splicing factor SF3B complex, a constituent of the spliceosome. SF3B complex is required for 'A' complex assembly formed by the stable binding of U2 snRNP to the branchpoint sequence (BPS) in pre-mRNA. Sequence independent binding of SF3A/SF3B complex upstream of the branch site is essential, it may anchor U2 snRNP to the pre-mRNA. May also be involved in the assembly of the 'E' complex. Also belongs to the minor U12-dependent spliceosome, which is involved in the splicing of rare class of nuclear pre-mRNA intron. The sequence is that of Splicing factor 3B subunit 3 from Drosophila melanogaster (Fruit fly).